We begin with the raw amino-acid sequence, 150 residues long: SsrA-binding protein (150 aa).

Belongs to the SmpB family.

Its subcellular location is the cytoplasm. In terms of biological role, required for rescue of stalled ribosomes mediated by trans-translation. Binds to transfer-messenger RNA (tmRNA), required for stable association of tmRNA with ribosomes. tmRNA and SmpB together mimic tRNA shape, replacing the anticodon stem-loop with SmpB. tmRNA is encoded by the ssrA gene; the 2 termini fold to resemble tRNA(Ala) and it encodes a 'tag peptide', a short internal open reading frame. During trans-translation Ala-aminoacylated tmRNA acts like a tRNA, entering the A-site of stalled ribosomes, displacing the stalled mRNA. The ribosome then switches to translate the ORF on the tmRNA; the nascent peptide is terminated with the 'tag peptide' encoded by the tmRNA and targeted for degradation. The ribosome is freed to recommence translation, which seems to be the essential function of trans-translation. The chain is SsrA-binding protein from Campylobacter jejuni subsp. doylei (strain ATCC BAA-1458 / RM4099 / 269.97).